A 163-amino-acid polypeptide reads, in one-letter code: NADH-quinone oxidoreductase subunit I (163 aa).

2 consecutive 4Fe-4S ferredoxin-type domains span residues 53–83 and 94–123; these read LRRY…IEAG and TRYD…EGPN. [4Fe-4S] cluster contacts are provided by C63, C66, C69, C73, C103, C106, C109, and C113.

It belongs to the complex I 23 kDa subunit family. As to quaternary structure, NDH-1 is composed of 14 different subunits. Subunits NuoA, H, J, K, L, M, N constitute the membrane sector of the complex. Requires [4Fe-4S] cluster as cofactor.

It localises to the cell inner membrane. It carries out the reaction a quinone + NADH + 5 H(+)(in) = a quinol + NAD(+) + 4 H(+)(out). Its function is as follows. NDH-1 shuttles electrons from NADH, via FMN and iron-sulfur (Fe-S) centers, to quinones in the respiratory chain. The immediate electron acceptor for the enzyme in this species is believed to be ubiquinone. Couples the redox reaction to proton translocation (for every two electrons transferred, four hydrogen ions are translocated across the cytoplasmic membrane), and thus conserves the redox energy in a proton gradient. This is NADH-quinone oxidoreductase subunit I from Parvibaculum lavamentivorans (strain DS-1 / DSM 13023 / NCIMB 13966).